The chain runs to 333 residues: Anthranilate phosphoribosyltransferase (333 aa).

5-phospho-alpha-D-ribose 1-diphosphate-binding positions include Gly81, 84-85 (GD), Thr89, 91-94 (NIST), 109-117 (KHGNRSVSS), and Ala121. An anthranilate-binding site is contributed by Gly81. Ser93 contributes to the Mg(2+) binding site. Residue Asn112 participates in anthranilate binding. Arg167 contributes to the anthranilate binding site. Mg(2+)-binding residues include Asp225 and Glu226.

The protein belongs to the anthranilate phosphoribosyltransferase family. Homodimer. Requires Mg(2+) as cofactor.

It carries out the reaction N-(5-phospho-beta-D-ribosyl)anthranilate + diphosphate = 5-phospho-alpha-D-ribose 1-diphosphate + anthranilate. It participates in amino-acid biosynthesis; L-tryptophan biosynthesis; L-tryptophan from chorismate: step 2/5. Functionally, catalyzes the transfer of the phosphoribosyl group of 5-phosphorylribose-1-pyrophosphate (PRPP) to anthranilate to yield N-(5'-phosphoribosyl)-anthranilate (PRA). The chain is Anthranilate phosphoribosyltransferase from Actinobacillus succinogenes (strain ATCC 55618 / DSM 22257 / CCUG 43843 / 130Z).